The following is a 105-amino-acid chain: ATP synthase subunit c (105 aa).

Transmembrane regions (helical) follow at residues 32 to 52 (SILG…IGMG) and 78 to 98 (VAMA…IIAI).

The protein belongs to the ATPase C chain family. In terms of assembly, F-type ATPases have 2 components, F(1) - the catalytic core - and F(0) - the membrane proton channel. F(1) has five subunits: alpha(3), beta(3), gamma(1), delta(1), epsilon(1). F(0) has three main subunits: a(1), b(2) and c(10-14). The alpha and beta chains form an alternating ring which encloses part of the gamma chain. F(1) is attached to F(0) by a central stalk formed by the gamma and epsilon chains, while a peripheral stalk is formed by the delta and b chains.

The protein localises to the cell inner membrane. Functionally, f(1)F(0) ATP synthase produces ATP from ADP in the presence of a proton or sodium gradient. F-type ATPases consist of two structural domains, F(1) containing the extramembraneous catalytic core and F(0) containing the membrane proton channel, linked together by a central stalk and a peripheral stalk. During catalysis, ATP synthesis in the catalytic domain of F(1) is coupled via a rotary mechanism of the central stalk subunits to proton translocation. Key component of the F(0) channel; it plays a direct role in translocation across the membrane. A homomeric c-ring of between 10-14 subunits forms the central stalk rotor element with the F(1) delta and epsilon subunits. The chain is ATP synthase subunit c from Helicobacter pylori (strain ATCC 700392 / 26695) (Campylobacter pylori).